Here is a 539-residue protein sequence, read N- to C-terminus: Lysophospholipid acyltransferase LPEAT2 (539 aa).

Residues 93–113 form a helical membrane-spanning segment; that stretch reads LVICLPIALIRLVLFAASLAV. Positions 178–183 match the HXXXXD motif motif; that stretch reads HVSYIE. 3 consecutive EF-hand domains span residues 426-455, 457-492, and 493-528; these read KRIF…VLTQ, LFKQ…TIPN, and LNKD…NPLL. Asp-470, Asp-472, Asp-474, Tyr-476, Glu-481, Asp-506, Asp-508, Asp-510, Arg-512, and Asp-517 together coordinate Ca(2+).

The protein belongs to the 1-acyl-sn-glycerol-3-phosphate acyltransferase family.

The protein resides in the golgi apparatus membrane. It is found in the late endosome membrane. It carries out the reaction a 1-acyl-sn-glycero-3-phosphoethanolamine + an acyl-CoA = a 1,2-diacyl-sn-glycero-3-phosphoethanolamine + CoA. The catalysed reaction is a 1-acyl-sn-glycero-3-phosphocholine + an acyl-CoA = a 1,2-diacyl-sn-glycero-3-phosphocholine + CoA. It catalyses the reaction a 1-acyl-sn-glycero-3-phospho-L-serine + an acyl-CoA = a 1,2-diacyl-sn-glycero-3-phospho-L-serine + CoA. It functions in the pathway lipid metabolism; phospholipid metabolism. Possesses acyl-CoA-dependent lysophospholipid acyltransferase activity with a subset of lysophospholipids as substrates. Exhibits strong acylation activity on lysophosphatidylethanolamine (LPE), and lower activity on lysophosphatidylcholine (LPC) and lysophosphatidylserine (LPS). Exhibits acylation activity on both LPE and LPC. Has a preference for 18:1-LPE over 16:0-LPE as acceptor. Palmitoyl-CoA (16:0-CoA) is a better acyl donor than oleoyl-CoA (18:1-CoA). Among several different acyl-CoA species the best acyl donor is eicosanoyl-CoA (20:0-CoA). Activity is calcium-independent. Its activity is essential for maintaining adequate levels of phosphatidylethanolamine (PE), LPE and LPC in the cells, which is crucial for plant growth regulation. The protein is Lysophospholipid acyltransferase LPEAT2 of Arabidopsis thaliana (Mouse-ear cress).